The chain runs to 163 residues: Calcium-binding protein 2 (163 aa).

Gly2 is lipidated: N-myristoyl glycine. EF-hand domains follow at residues 21–56 (EEIE…LGYM), 72–89 (GKVD…KLLA), 95–130 (IGVR…LLGE), and 132–163 (LSQR…MMSR). Residues Asp34, Asp36, Asp38, Tyr40, and Glu45 each contribute to the Ca(2+) site. Residues Asp108, Asn110, Asp112, Cys114, Glu119, Asp145, Asn147, Asp149, and Glu156 each coordinate Ca(2+).

The protein localises to the cytoplasm. The protein resides in the perinuclear region. It localises to the cell membrane. Its subcellular location is the golgi apparatus. Functionally, required for sound encoding at inner hair cells (IHCs) synapses, likely via inhibition of the inactivation of voltage-gated calcium channel of type 1.3 (Cav1.3) in the IHCs. Required for the normal transfer of light signals through the retina. The sequence is that of Calcium-binding protein 2 (CABP2) from Bos taurus (Bovine).